Consider the following 1022-residue polypeptide: Protein trachealess (1022 aa).

Residues 86 to 139 (LRKEKSRDAARSRRGKENYEFYELAKMLPLPAAITSQLDKASIIRLTISYLKLR) form the bHLH domain. The 71-residue stretch at 174 to 244 (EQHQGTHILQ…DQLGLSLTSG (71 aa)) folds into the PAS 1 domain. The interval 239-289 (LSLTSGGGGGGGSSSSGGGGGGAGGGMASPTSGASDDGSGTHGTNNPDVAA) is disordered. Residues 243-265 (SGGGGGGGSSSSGGGGGGAGGGM) are compositionally biased toward gly residues. Residues 280–289 (HGTNNPDVAA) show a composition bias toward polar residues. The region spanning 391–461 (PPPSVHEIRL…KSHSDLIEKG (71 aa)) is the PAS 2 domain. Residues 465 to 508 (TGYYRLMNKSGGYTWLQTCATVVCSTKNADEQNIICVNYVISNR) form the PAC domain. 3 disordered regions span residues 525–686 (DSIK…ADSA), 849–896 (AMTP…GDVV), and 962–996 (DDQGQVPPSCQDQYHHHHHHHHHQDGSAGSSASQA). Low complexity-rich tracts occupy residues 578–587 (RSAAASHGSS) and 611–625 (PTTVATPVPAATPPV). The short motif at 629–636 (KRKRKTKA) is the Nuclear localization signal element. Phosphoserine; by PKB/Akt1 is present on S673. A compositionally biased stretch (polar residues) spans 851–864 (TPPSSVSPRDSNQP). A compositionally biased stretch (low complexity) spans 987 to 996 (GSAGSSASQA).

As to quaternary structure, efficient DNA binding requires dimerization with another bHLH protein. Heterodimer with tgo. In terms of processing, ser-673 phosphorylation by PKB/Akt1 is required for nuclear targeting and transcriptional activity. As to expression, trachea, salivary gland ducts, posterior spiracles (Filzkoeper primordia) and a subset of cells in the CNS.

It is found in the nucleus. Its function is as follows. Transcription factor, master regulator of tracheal cell fates in the embryo, necessary for the development of the salivary gland duct, Malpighian tubules and the posterior spiracles. It may induce a general fate of branched tubular structures of epithelial origin. Functions with tgo to regulate expression of btl. The sequence is that of Protein trachealess (trh) from Drosophila melanogaster (Fruit fly).